Reading from the N-terminus, the 1444-residue chain is Cleavage and polyadenylation specificity factor subunit 1 (1444 aa).

Disordered regions lie at residues 406 to 439 (PPASTAREAADKEEPPSKKKRVDATTGWSGSKSV), 549 to 571 (EETLKGEGTEPEPGAPEAEDDGR), 716 to 778 (GGVR…PAPF), and 902 to 924 (FREKKPKPSKKKAEGGSTEEGTG). Over residues 413–422 (EAADKEEPPS) the composition is skewed to basic and acidic residues. Phosphoserine is present on residues serine 757 and serine 767. Basic and acidic residues predominate over residues 759–776 (SKEEARRSSQPPADRDPA). A Nuclear localization signal motif is present at residues 894–909 (KKVPHNINFREKKPKP).

It belongs to the CPSF1 family. As to quaternary structure, component of the cleavage and polyadenylation specificity factor (CPSF) complex, composed of CPSF1, CPSF2, CPSF3, CPSF4 and FIP1L1. Found in a complex with CPSF1, FIP1L1 and PAPOLA. Interacts with FIP1L1, TENT2/GLD2 and SRRM1. Interacts with TUT1; the interaction is direct and mediates the recruitment of the CPSF complex on the 3'UTR of selected pre-mRNAs. The N-terminus is blocked.

It localises to the nucleus. The protein resides in the nucleoplasm. Component of the cleavage and polyadenylation specificity factor (CPSF) complex that plays a key role in pre-mRNA 3'-end formation, recognizing the AAUAAA signal sequence and interacting with poly(A) polymerase and other factors to bring about cleavage and poly(A) addition. This subunit is involved in the RNA recognition step of the polyadenylation reaction. May play a role in eye morphogenesis and the development of retinal ganglion cell projections to the midbrain. This Bos taurus (Bovine) protein is Cleavage and polyadenylation specificity factor subunit 1 (CPSF1).